The following is a 190-amino-acid chain: uncharacterized protein (190 aa).

This is an uncharacterized protein from Aquifex aeolicus (strain VF5).